The primary structure comprises 330 residues: Aspartate--ammonia ligase (330 aa).

This sequence belongs to the class-II aminoacyl-tRNA synthetase family. AsnA subfamily.

It localises to the cytoplasm. It catalyses the reaction L-aspartate + NH4(+) + ATP = L-asparagine + AMP + diphosphate + H(+). It functions in the pathway amino-acid biosynthesis; L-asparagine biosynthesis; L-asparagine from L-aspartate (ammonia route): step 1/1. This is Aspartate--ammonia ligase from Salmonella agona (strain SL483).